Reading from the N-terminus, the 656-residue chain is MWKGLLQSTRAAWRGPCVRAPRLPFFRRYSLCVDPEIAALSGPELEARIAAIPIERYRNFSIVAHVDHGKSTLSDRLLELTGVIAAGGQKQFLDKLDVERERGITVKAQTCTMLYKHKGEDYLLHLVDTPGHVDFRAEVSRSYASCGGALLLVDASQGVQAQTVANFFLAFSLNLTLLPVINKIDLEVADIPRSMDQIESTFELPTDNVLQVSAKTGLNVDQILPNVIENIPGPDGKLEDPLRALIVDSWYDNYLGVVLLTYVRDGVVSRGTKVISHHTGRKYDVKEVGIMYPGSVKTKELKAGQVGYMALGMKSSSEAHTGDTLIKVNSNAEPLPGFAETKPMVFVGVFPGEGMDFADLEESLQHLTLNDRSVTMTKATSQALGQGWRMGFLGTLHASVFEDRLLQEHGAHVIITAPSVPYRVVYHPRGKETEPTIVEIDNPANFPDLQLEKARIQSLEEPMVACTMTLPQEYIGSVMSLCEANRGEQVDMNYLNQTQVLLKYRIPLNQLVEDFFGKLKAASQGFASLDYEEDGYMASKLVRLDMCVNGEVVDALSQVMHVSQAETRARDWVEKFKTFLRWHQFDVIIQAKIGNKILARETIKARKKDVLAKLHAADLSRKAKLLKNQKAGKNRLQTAGRVNIPKEAFSGFLSKT.

Residues 1 to 28 constitute a mitochondrion transit peptide; sequence MWKGLLQSTRAAWRGPCVRAPRLPFFRR. Residues 55–235 enclose the tr-type G domain; sequence ERYRNFSIVA…NVIENIPGPD (181 aa). GTP is bound by residues 64–71, 128–132, and 182–185; these read AHVDHGKS, DTPGH, and NKID.

It belongs to the TRAFAC class translation factor GTPase superfamily. Classic translation factor GTPase family. LepA subfamily.

The protein resides in the mitochondrion inner membrane. It catalyses the reaction GTP + H2O = GDP + phosphate + H(+). Promotes mitochondrial protein synthesis. May act as a fidelity factor of the translation reaction, by catalyzing a one-codon backward translocation of tRNAs on improperly translocated ribosomes. Binds to mitochondrial ribosomes in a GTP-dependent manner. The polypeptide is Translation factor GUF1, mitochondrial (Yarrowia lipolytica (strain CLIB 122 / E 150) (Yeast)).